The sequence spans 94 residues: Large ribosomal subunit protein uL23 (94 aa).

This sequence belongs to the universal ribosomal protein uL23 family. In terms of assembly, part of the 50S ribosomal subunit. Contacts protein L29, and trigger factor when it is bound to the ribosome.

Its function is as follows. One of the early assembly proteins it binds 23S rRNA. One of the proteins that surrounds the polypeptide exit tunnel on the outside of the ribosome. Forms the main docking site for trigger factor binding to the ribosome. This is Large ribosomal subunit protein uL23 from Roseiflexus sp. (strain RS-1).